The chain runs to 369 residues: Peptide chain release factor 2 (369 aa).

Glutamine 249 is modified (N5-methylglutamine).

It belongs to the prokaryotic/mitochondrial release factor family. Post-translationally, methylated by PrmC. Methylation increases the termination efficiency of RF2.

Its subcellular location is the cytoplasm. In terms of biological role, peptide chain release factor 2 directs the termination of translation in response to the peptide chain termination codons UGA and UAA. In Thermosipho melanesiensis (strain DSM 12029 / CIP 104789 / BI429), this protein is Peptide chain release factor 2.